Here is a 210-residue protein sequence, read N- to C-terminus: Ribosomal RNA small subunit methyltransferase G (210 aa).

S-adenosyl-L-methionine is bound by residues G75, F80, 98-100 (EST), 126-127 (AE), and R141.

The protein belongs to the methyltransferase superfamily. RNA methyltransferase RsmG family.

Its subcellular location is the cytoplasm. Its function is as follows. Specifically methylates the N7 position of a guanine in 16S rRNA. This Solibacter usitatus (strain Ellin6076) protein is Ribosomal RNA small subunit methyltransferase G.